We begin with the raw amino-acid sequence, 739 residues long: Adenosylcobalamin-dependent ribonucleoside-triphosphate reductase (739 aa).

Residues Cys-119 and Cys-419 are joined by a disulfide bond. Residues 147 to 158 (SMPFSFLFDELM) form an effector region-1 region. The segment at 168-313 (ARSNISQIPR…ICNLIGKAVV (146 aa)) is effector region-2. Catalysis depends on residues Cys-408 and Glu-410. The adenosylcobalamin-binding-1 stretch occupies residues 565-626 (FHYGAYLIQR…NPNFASAGTV (62 aa)). The interval 685–724 (LQQAPKEPIDKETYEKRSQEITGNVEEVFSQLNSDVKDLE) is adenosylcobalamin-binding-2.

This sequence belongs to the class II ribonucleoside-triphosphate reductase family. As to quaternary structure, monomer. Requires adenosylcob(III)alamin as cofactor.

The catalysed reaction is a 2'-deoxyribonucleoside 5'-triphosphate + [thioredoxin]-disulfide + H2O = a ribonucleoside 5'-triphosphate + [thioredoxin]-dithiol. Its activity is regulated as follows. Allosterically regulated by ATP and dNTP. This is Adenosylcobalamin-dependent ribonucleoside-triphosphate reductase (rtpR) from Lactobacillus delbrueckii subsp. bulgaricus (strain ATCC BAA-365 / Lb-18).